Consider the following 880-residue polypeptide: Alanine--tRNA ligase (880 aa).

Positions 567, 571, 669, and 673 each coordinate Zn(2+).

This sequence belongs to the class-II aminoacyl-tRNA synthetase family. Requires Zn(2+) as cofactor.

The protein resides in the cytoplasm. The enzyme catalyses tRNA(Ala) + L-alanine + ATP = L-alanyl-tRNA(Ala) + AMP + diphosphate. In terms of biological role, catalyzes the attachment of alanine to tRNA(Ala) in a two-step reaction: alanine is first activated by ATP to form Ala-AMP and then transferred to the acceptor end of tRNA(Ala). Also edits incorrectly charged Ser-tRNA(Ala) and Gly-tRNA(Ala) via its editing domain. In Bacillus cytotoxicus (strain DSM 22905 / CIP 110041 / 391-98 / NVH 391-98), this protein is Alanine--tRNA ligase.